The following is a 1228-amino-acid chain: MSSLYTLRAAAQYDRRLESKKGSGWVEHKLERKGERGNTHYCSEFDISKGAKILQLVQIGNTEVGRTFLEGNRFVRANIFEIIRKTMVGRLGYDFESELWVCRNCDKTSEKYFKKCDCGETYYYSERNLMRTMNDLMYQFDMTPSEINSVDLEYLANAVDYAEQLVKRSQVPEPVELAMMEPIVASGEGILMVSEPEVMPVTTKVEEAWTIQIGEIPVPLVVIKETPVISGVEGTLNSTGFSLEADITKLVEKEILQEEVKEAVHLALEVGNEIAEKKPELKLIPYWSASLELHKRIRKHKEHAKIAAIQVQKEREKDQKVFSALELRLNLKSRRRNQAVVCDKRGTLKWETQRGHKKSKLMQQASDFVVTQIHCDFGCKTQYSEPHIPGIKQSTSKKICKPRKHSRIVGNSKINYIMKNLCDTIIERGIPVELVTKRCKRRILQKEGRSYVQLRHMNGIRARQDVSSSPDMELLFTQFCKFLVGHKPLKSKNLTFGSSGLIFKPKFADNVGRYFGDYFVVRGRLGGKLFDGRSKLARSVYAKMDQYNDVAEKFWLGFNRAFLRHRKPTDHTCTSDMDVTMCGEVAALATIILFPCHKITCNTCMSKVKGRVIDEVGEDLNCELERLRETLSAYGGSFGHVSTLLDQLNRVLNARNMNDGAFKEIAKKIDEKKESPWTHMTTINNTLYKGSLATGYEFERASNSLREIVRWHLKRTESIKAGSVESFRNKRSGKAHFNPALTCDNQLDKNGNFLWGERQYHAKRFFANYFEKIDHSKGYEYYSQRQNPNGIRKIAIGNLVFSTNLERFRQQMVEHHIDQGPITRECIALRNNNYVHVCSCVTLDDGTPATSELKTPTKNHIVLGNSGDPKYVDLPTLESDSMYIAKKGYCYMNIFLAMLINIPENEAKDFTKRVRDLVGSKLGEWPTMLDVATCANQLVVFHPDAANAELPQILVDHRQKTMHVIDSFGSVDSGYHILKANTVNQLIQFARDPLDSEMKHYIVGGEFDPTTNCLHQLIRVIYKPHELRSLLRNEPYLIVIALMSPSVLLTLFNSGAVEHALNYWIKRDQDVVEVIVLVEQLCRKVTLARTILEQFNEIRQNARDLHELMDRNNKPWISYDRSLELLSVYANSQLTDEGLLKQGFSTLDPRLREAVEKNLRHSFAGRMACVKFVSKVALKVLCVQITTVFFRVFKAKRARRFKNCIRLLTEILCTRGRKSVPTASQGWG.

In terms of domain architecture, Peptidase S30 spans 408 to 547 (IVGNSKINYI…RSVYAKMDQY (140 aa)). Active-site for P1 proteinase activity residues include His456, Asp465, and Ser499. Residues 598-601 (KITC) carry the Involved in interaction with stylet and aphid transmission motif. The Involved in virions binding and aphid transmission signature appears at 856–858 (PTK). The region spanning 882–1004 (MYIAKKGYCY…DSEMKHYIVG (123 aa)) is the Peptidase C6 domain. Active-site for helper component proteinase activity residues include Cys890 and His963.

The protein belongs to the potyviridae P3N-PIPO polyprotein family. As to quaternary structure, interacts (via PIPO domain) with host PCaP1 protein; this interaction may help to anchor the movement complex to the plasma membrane from which the complex could move to the plasmodesmata. Potyviral RNA is expressed as two polyproteins which undergo post-translational proteolytic processing. Genome polyprotein is processed by NIa-pro, P1 and HC-pro proteinases resulting in the production of at least ten individual proteins. P3N-PIPO is cleaved by P1 and HC-pro proteinases resulting in the production of three individual proteins. The P1 proteinase and the HC-pro cleave only their respective C-termini autocatalytically.

It localises to the host cell junction. Its subcellular location is the host plasmodesma. The enzyme catalyses Hydrolyzes a Gly-|-Gly bond at its own C-terminus, commonly in the sequence -Tyr-Xaa-Val-Gly-|-Gly, in the processing of the potyviral polyprotein.. Functionally, required for aphid transmission and also has proteolytic activity. Only cleaves a Gly-Gly dipeptide at its own C-terminus. Interacts with virions and aphid stylets. Acts as a suppressor of RNA-mediated gene silencing, also known as post-transcriptional gene silencing (PTGS), a mechanism of plant viral defense that limits the accumulation of viral RNAs. May have RNA-binding activity. Allows efficient cell to cell propagation, by bypassing the host cell wall barrier. Transports viral genome to neighboring plant cells directly through plasmosdesmata, without any budding. The sequence is that of P3N-PIPO polyprotein from Carica papaya (Papaya).